We begin with the raw amino-acid sequence, 166 residues long: Endoribonuclease YbeY (166 aa).

Residues histidine 132, histidine 136, and histidine 142 each coordinate Zn(2+).

Belongs to the endoribonuclease YbeY family. It depends on Zn(2+) as a cofactor.

The protein localises to the cytoplasm. Its function is as follows. Single strand-specific metallo-endoribonuclease involved in late-stage 70S ribosome quality control and in maturation of the 3' terminus of the 16S rRNA. The protein is Endoribonuclease YbeY of Clostridium botulinum (strain Eklund 17B / Type B).